Here is a 223-residue protein sequence, read N- to C-terminus: Small ribosomal subunit protein uS3 (223 aa).

The region spanning 39-108 is the KH type-2 domain; that stretch reads IRNFVKKNSY…NILINIVEVK (70 aa).

Belongs to the universal ribosomal protein uS3 family. As to quaternary structure, part of the 30S ribosomal subunit. Forms a tight complex with proteins S10 and S14.

Functionally, binds the lower part of the 30S subunit head. Binds mRNA in the 70S ribosome, positioning it for translation. The chain is Small ribosomal subunit protein uS3 from Clostridium botulinum (strain Okra / Type B1).